A 906-amino-acid chain; its full sequence is Protein translocase subunit SecA (906 aa).

ATP-binding positions include glutamine 87, 105–109 (GEGKT), and aspartate 512. Positions 875-897 (VTFVRDEQKVGRNDPCPCGSGKK) are disordered. The Zn(2+) site is built by cysteine 890, cysteine 892, cysteine 901, and histidine 902.

This sequence belongs to the SecA family. Monomer and homodimer. Part of the essential Sec protein translocation apparatus which comprises SecA, SecYEG and auxiliary proteins SecDF-YajC and YidC. Zn(2+) is required as a cofactor.

It localises to the cell inner membrane. The protein localises to the cytoplasm. It carries out the reaction ATP + H2O + cellular proteinSide 1 = ADP + phosphate + cellular proteinSide 2.. Its function is as follows. Part of the Sec protein translocase complex. Interacts with the SecYEG preprotein conducting channel. Has a central role in coupling the hydrolysis of ATP to the transfer of proteins into and across the cell membrane, serving both as a receptor for the preprotein-SecB complex and as an ATP-driven molecular motor driving the stepwise translocation of polypeptide chains across the membrane. In Aeromonas hydrophila subsp. hydrophila (strain ATCC 7966 / DSM 30187 / BCRC 13018 / CCUG 14551 / JCM 1027 / KCTC 2358 / NCIMB 9240 / NCTC 8049), this protein is Protein translocase subunit SecA.